The sequence spans 377 residues: Histone deacetylase 8 (377 aa).

Residues 14 to 324 (LPPVYIYSPE…WTYLTGVILG (311 aa)) form a histone deacetylase region. Ser39 carries the phosphoserine modification. Asp101 is a binding site for substrate. His143 acts as the Proton acceptor in catalysis. Gly151 contacts substrate. A divalent metal cation-binding residues include Asp178, His180, and Asp267. Residue Tyr306 coordinates substrate.

This sequence belongs to the histone deacetylase family. HD type 1 subfamily. As to quaternary structure, interacts with CBFA2T3. Interacts with phosphorylated SMG5/EST1B; this interaction protects SMG5 from ubiquitin-mediated degradation. Associates with alpha-SMA (smooth muscle alpha-actin). A divalent metal cation serves as cofactor. Phosphorylated by PKA on serine 39. Phosphorylation reduces deacetylase activity observed preferentially on histones H3 and H4.

The protein localises to the nucleus. It is found in the chromosome. It localises to the cytoplasm. The enzyme catalyses N(6)-acetyl-L-lysyl-[histone] + H2O = L-lysyl-[histone] + acetate. The catalysed reaction is N(6)-acetyl-L-lysyl-[protein] + H2O = L-lysyl-[protein] + acetate. It carries out the reaction N(6)-(2E)-butenoyl-L-lysyl-[protein] + H2O = (2E)-2-butenoate + L-lysyl-[protein]. With respect to regulation, its activity is inhibited by trichostatin A (TSA) and butyrate, 2 well known histone deacetylase inhibitors. Functionally, histone deacetylase that catalyzes the deacetylation of lysine residues on the N-terminal part of the core histones (H2A, H2B, H3 and H4). Histone deacetylation gives a tag for epigenetic repression and plays an important role in transcriptional regulation, cell cycle progression and developmental events. Histone deacetylases act via the formation of large multiprotein complexes. Also involved in the deacetylation of cohesin complex protein SMC3 regulating release of cohesin complexes from chromatin. May play a role in smooth muscle cell contractility. In addition to protein deacetylase activity, also has protein-lysine deacylase activity: acts as a protein decrotonylase by mediating decrotonylation ((2E)-butenoyl) of histones. In Bos taurus (Bovine), this protein is Histone deacetylase 8 (HDAC8).